A 226-amino-acid chain; its full sequence is DNA mismatch repair protein MutH (226 aa).

It belongs to the MutH family.

It localises to the cytoplasm. In terms of biological role, sequence-specific endonuclease that cleaves unmethylated GATC sequences. It is involved in DNA mismatch repair. The chain is DNA mismatch repair protein MutH from Vibrio campbellii (strain ATCC BAA-1116).